The sequence spans 251 residues: Phosphoribosylaminoimidazole-succinocarboxamide synthase (251 aa).

The protein belongs to the SAICAR synthetase family.

It carries out the reaction 5-amino-1-(5-phospho-D-ribosyl)imidazole-4-carboxylate + L-aspartate + ATP = (2S)-2-[5-amino-1-(5-phospho-beta-D-ribosyl)imidazole-4-carboxamido]succinate + ADP + phosphate + 2 H(+). It functions in the pathway purine metabolism; IMP biosynthesis via de novo pathway; 5-amino-1-(5-phospho-D-ribosyl)imidazole-4-carboxamide from 5-amino-1-(5-phospho-D-ribosyl)imidazole-4-carboxylate: step 1/2. This Ruegeria pomeroyi (strain ATCC 700808 / DSM 15171 / DSS-3) (Silicibacter pomeroyi) protein is Phosphoribosylaminoimidazole-succinocarboxamide synthase.